We begin with the raw amino-acid sequence, 433 residues long: 3-phosphoshikimate 1-carboxyvinyltransferase (433 aa).

3 residues coordinate 3-phosphoshikimate: Lys22, Ser23, and Arg27. Phosphoenolpyruvate is bound at residue Lys22. Gly95 and Arg123 together coordinate phosphoenolpyruvate. Positions 166, 168, 314, and 341 each coordinate 3-phosphoshikimate. Gln168 is a phosphoenolpyruvate binding site. The Proton acceptor role is filled by Asp314. Positions 345 and 386 each coordinate phosphoenolpyruvate.

The protein belongs to the EPSP synthase family. Monomer.

It localises to the cytoplasm. The enzyme catalyses 3-phosphoshikimate + phosphoenolpyruvate = 5-O-(1-carboxyvinyl)-3-phosphoshikimate + phosphate. It participates in metabolic intermediate biosynthesis; chorismate biosynthesis; chorismate from D-erythrose 4-phosphate and phosphoenolpyruvate: step 6/7. In terms of biological role, catalyzes the transfer of the enolpyruvyl moiety of phosphoenolpyruvate (PEP) to the 5-hydroxyl of shikimate-3-phosphate (S3P) to produce enolpyruvyl shikimate-3-phosphate and inorganic phosphate. This chain is 3-phosphoshikimate 1-carboxyvinyltransferase, found in Acidithiobacillus ferrooxidans (strain ATCC 23270 / DSM 14882 / CIP 104768 / NCIMB 8455) (Ferrobacillus ferrooxidans (strain ATCC 23270)).